Reading from the N-terminus, the 68-residue chain is MAVPQNRVTRSRRNMRRSHDALVAANPAECPNCGELKRPHHVCGACGHYDSREVVAVTAETDLDEDAA.

The protein belongs to the bacterial ribosomal protein bL32 family.

The polypeptide is Large ribosomal subunit protein bL32 (Cereibacter sphaeroides (strain ATCC 17025 / ATH 2.4.3) (Rhodobacter sphaeroides)).